A 618-amino-acid polypeptide reads, in one-letter code: MPIQVLPPQLANQIAAGEVVERPASVVKELVENSLDAGATRIDIDIERGGAKLIRIRDNGCGIKKEELALALARHATSKIASLDDLEAIISLGFRGEALASISSVSRLTLTSRTAEQSEAWQAYAEGRDMDVTVKPAAHPVGTTLEVLDLFYNTPARRKFMRTEKTEFNHIDEIIRRIALARFDVTLNLSHNGKLVRQYRAVARDGQKERRLGAICGTPFLEQALAIEWQHGDLTLRGWVADPNHTTTALAEIQYCYVNGRMMRDRLINHAIRQACEEKLGADQQPAFVLYLEIDPHQVDVNVHPAKHEVRFHQSRLVHDFIYQGVLSVLQQQTETTLPLEEIAPAPRHVPENRIAAGRNHFAEPVVPTAAREPATPRYSGGASGGSGGRQSVGGWSHAQPGYQKQQGEVYRALLQTPAASSTPEPVAPALDGHSQSFGRVLTIVGGDCALLEHGGNIQLLSLPVAERWLRQAQLTPGQSPVCAQPLLIPLRLKVSADEKASLQKAQPFLGELGIEFQSDAQHVTIRAVPLPLRQQNLQILIPELIGYLAQQTTFATVNIAQWIARNVQSEHPQWSMAQAISLLADVERLCPQLVKAPPGGLLQPVDLHSAMNALKHE.

The tract at residues 371 to 401 (AREPATPRYSGGASGGSGGRQSVGGWSHAQP) is disordered. Gly residues predominate over residues 382–392 (GASGGSGGRQS).

Belongs to the DNA mismatch repair MutL/HexB family.

Functionally, this protein is involved in the repair of mismatches in DNA. It is required for dam-dependent methyl-directed DNA mismatch repair. May act as a 'molecular matchmaker', a protein that promotes the formation of a stable complex between two or more DNA-binding proteins in an ATP-dependent manner without itself being part of a final effector complex. The protein is DNA mismatch repair protein MutL of Salmonella arizonae (strain ATCC BAA-731 / CDC346-86 / RSK2980).